The following is a 221-amino-acid chain: Early nodulin-like protein 4 (221 aa).

A signal peptide spans 1–21; that stretch reads MVFVKMTDVYLMIVMLMGLGF. The region spanning 29–130 is the Phytocyanin domain; the sequence is HKFYVGGRDG…GQKLAVTVMS (102 aa). N-linked (GlcNAc...) asparagine glycans are attached at residues N59 and N85. A disulfide bond links C84 and C118. Residues 130–185 are disordered; sequence STGHHSHTPRHPSPSPSPSASPVRKALLSPAPIPVHKALSSPAPTPGVDPSHSEVL. N197 carries the GPI-anchor amidated asparagine lipid modification. Residues 198–221 constitute a propeptide, removed in mature form; the sequence is LAGSVAPGVISLGLVLVIMISSMV.

This sequence belongs to the early nodulin-like (ENODL) family. As to expression, confined to flowers.

The protein resides in the cell membrane. Its function is as follows. May act as a carbohydrate transporter. In Arabidopsis thaliana (Mouse-ear cress), this protein is Early nodulin-like protein 4.